A 503-amino-acid polypeptide reads, in one-letter code: tRNA-guanine(15) transglycosylase (503 aa).

Aspartate 86 acts as the Nucleophile in catalysis. A substrate-binding site is contributed by aspartate 121. 3 residues coordinate Zn(2+): cysteine 278, cysteine 280, and cysteine 283.

The protein belongs to the archaeosine tRNA-ribosyltransferase family. The cofactor is Zn(2+).

The catalysed reaction is guanosine(15) in tRNA + 7-cyano-7-deazaguanine = 7-cyano-7-carbaguanosine(15) in tRNA + guanine. The protein operates within tRNA modification; archaeosine-tRNA biosynthesis. Functionally, exchanges the guanine residue with 7-cyano-7-deazaguanine (preQ0) at position 15 in the dihydrouridine loop (D-loop) of archaeal tRNAs. The protein is tRNA-guanine(15) transglycosylase of Saccharolobus solfataricus (strain ATCC 35092 / DSM 1617 / JCM 11322 / P2) (Sulfolobus solfataricus).